A 285-amino-acid polypeptide reads, in one-letter code: Putative pyruvate, phosphate dikinase regulatory protein (285 aa).

165–172 is an ADP binding site; that stretch reads GVSRTSKT.

The protein belongs to the pyruvate, phosphate/water dikinase regulatory protein family. PDRP subfamily.

The enzyme catalyses N(tele)-phospho-L-histidyl/L-threonyl-[pyruvate, phosphate dikinase] + ADP = N(tele)-phospho-L-histidyl/O-phospho-L-threonyl-[pyruvate, phosphate dikinase] + AMP + H(+). It catalyses the reaction N(tele)-phospho-L-histidyl/O-phospho-L-threonyl-[pyruvate, phosphate dikinase] + phosphate + H(+) = N(tele)-phospho-L-histidyl/L-threonyl-[pyruvate, phosphate dikinase] + diphosphate. Bifunctional serine/threonine kinase and phosphorylase involved in the regulation of the pyruvate, phosphate dikinase (PPDK) by catalyzing its phosphorylation/dephosphorylation. In Lactobacillus delbrueckii subsp. bulgaricus (strain ATCC BAA-365 / Lb-18), this protein is Putative pyruvate, phosphate dikinase regulatory protein.